Reading from the N-terminus, the 451-residue chain is Signal recognition particle 54 kDa protein (451 aa).

GTP is bound by residues 105 to 112, 187 to 191, and 247 to 250; these read GVQGTGKT, DTAGR, and TKMD.

It belongs to the GTP-binding SRP family. SRP54 subfamily. Part of the signal recognition particle protein translocation system, which is composed of SRP and FtsY. Archaeal SRP consists of a 7S RNA molecule of 300 nucleotides and two protein subunits: SRP54 and SRP19.

Its subcellular location is the cytoplasm. It carries out the reaction GTP + H2O = GDP + phosphate + H(+). Involved in targeting and insertion of nascent membrane proteins into the cytoplasmic membrane. Binds to the hydrophobic signal sequence of the ribosome-nascent chain (RNC) as it emerges from the ribosomes. The SRP-RNC complex is then targeted to the cytoplasmic membrane where it interacts with the SRP receptor FtsY. This Acidianus ambivalens (Desulfurolobus ambivalens) protein is Signal recognition particle 54 kDa protein.